Reading from the N-terminus, the 487-residue chain is Glutamyl-tRNA(Gln) amidotransferase subunit A (487 aa).

Active-site charge relay system residues include K78 and S153. Residue S177 is the Acyl-ester intermediate of the active site.

Belongs to the amidase family. GatA subfamily. Heterotrimer of A, B and C subunits.

The catalysed reaction is L-glutamyl-tRNA(Gln) + L-glutamine + ATP + H2O = L-glutaminyl-tRNA(Gln) + L-glutamate + ADP + phosphate + H(+). Allows the formation of correctly charged Gln-tRNA(Gln) through the transamidation of misacylated Glu-tRNA(Gln) in organisms which lack glutaminyl-tRNA synthetase. The reaction takes place in the presence of glutamine and ATP through an activated gamma-phospho-Glu-tRNA(Gln). The chain is Glutamyl-tRNA(Gln) amidotransferase subunit A from Oenococcus oeni (strain ATCC BAA-331 / PSU-1).